Here is a 167-residue protein sequence, read N- to C-terminus: Transmembrane protein 229B (167 aa).

Topologically, residues 1–14 (MAAAEPLTAFSRWY) are cytoplasmic. The helical transmembrane segment at 15-35 (LYAIHGYFCEVMFTAAWEFVV) threads the bilayer. The Extracellular segment spans residues 36 to 40 (NFNWK). A helical membrane pass occupies residues 41 to 61 (FPGVTSVWALFIYGTSILIVE). Over 62-72 (KMYLYLKDKCH) the chain is Cytoplasmic. Residues 73–93 (ILVRCFIYTLWTYLWEFTTGL) traverse the membrane as a helical segment. The Extracellular portion of the chain corresponds to 94 to 109 (ILRQFNACPWDYSQFD). Residues 110–130 (FDFMGLITLEYAIPWFCASFI) form a helical membrane-spanning segment. At 131 to 167 (MEQLVIRNTLRLRFDETAEPGAPTVPVALANGHVKTD) the chain is on the cytoplasmic side.

It belongs to the TMEM229 family.

Its subcellular location is the membrane. This Gallus gallus (Chicken) protein is Transmembrane protein 229B (TMEM229B).